We begin with the raw amino-acid sequence, 493 residues long: EGF-containing fibulin-like extracellular matrix protein 1 (493 aa).

Positions 1-17 (MLKALFLTMLTLALVKS) are cleaved as a signal peptide. Residues 26-71 (YTQCTDGYEWDPVRQQCKDIDECDIVPDACKGGMKCVNHYGGYLCL) form the EGF-like 1; atypical domain. The region spanning 173-213 (DIDECTAGTHNCRADQVCINLRGSFACQCPPGYQKRGEQCV) is the EGF-like 2; calcium-binding domain. Disulfide bonds link Cys-177-Cys-190, Cys-184-Cys-199, Cys-201-Cys-212, Cys-218-Cys-228, Cys-224-Cys-237, Cys-239-Cys-252, Cys-258-Cys-268, Cys-264-Cys-277, Cys-279-Cys-292, Cys-298-Cys-309, Cys-305-Cys-318, Cys-320-Cys-332, Cys-338-Cys-350, Cys-344-Cys-359, and Cys-365-Cys-377. The EGF-like 3; calcium-binding domain occupies 214-253 (DIDECTIPPYCHQRCVNTPGSFYCQCSPGFQLAANNYTCV). Asn-249 is a glycosylation site (N-linked (GlcNAc...) asparagine). In terms of domain architecture, EGF-like 4; calcium-binding spans 254-293 (DINECDASNQCAQQCYNILGSFICQCNQGYELSSDRLNCE). Positions 259–493 (DASNQCAQQC…LTIIVGPFSF (235 aa)) are mediates interaction with TIMP3. The EGF-like 5; calcium-binding domain occupies 294–333 (DIDECRTSSYLCQYQCVNEPGKFSCMCPQGYQVVRSRTCQ). The EGF-like 6; calcium-binding domain maps to 334–378 (DINECETTNECREDEMCWNYHGGFRCYPRNPCQDPYILTPENRCV).

The protein belongs to the fibulin family. Interacts with ECM1. Interacts with TIMP3. In the eye, associated with photoreceptor outer and inner segment regions, the nerve fiber layer, outer nuclear layer and inner and outer plexiform layers of the retina.

Its subcellular location is the secreted. It localises to the extracellular space. The protein localises to the extracellular matrix. Functionally, binds EGFR, the EGF receptor, inducing EGFR autophosphorylation and the activation of downstream signaling pathways. May play a role in cell adhesion and migration. May function as a negative regulator of chondrocyte differentiation. In the olfactory epithelium, it may regulate glial cell migration, differentiation and the ability of glial cells to support neuronal neurite outgrowth. This chain is EGF-containing fibulin-like extracellular matrix protein 1 (EFEMP1), found in Homo sapiens (Human).